Consider the following 362-residue polypeptide: Diphosphomevalonate decarboxylase (362 aa).

Residues 17-20, R72, 150-155, and T206 contribute to the (R)-5-diphosphomevalonate site; these read YWGK and SGSACR.

Belongs to the diphosphomevalonate decarboxylase family. As to quaternary structure, homodimer.

The enzyme catalyses (R)-5-diphosphomevalonate + ATP = isopentenyl diphosphate + ADP + phosphate + CO2. It functions in the pathway isoprenoid biosynthesis; isopentenyl diphosphate biosynthesis via mevalonate pathway; isopentenyl diphosphate from (R)-mevalonate: step 3/3. Functionally, diphosphomevalonate decarboxylase; part of the second module of ergosterol biosynthesis pathway that includes the middle steps of the pathway. MVD1 converts diphosphomevalonate into isopentenyl diphosphate. The second module is carried out in the vacuole and involves the formation of farnesyl diphosphate, which is also an important intermediate in the biosynthesis of ubiquinone, dolichol, heme and prenylated proteins. Activity by the mevalonate kinase ERG12 first converts mevalonate into 5-phosphomevalonate. 5-phosphomevalonate is then further converted to 5-diphosphomevalonate by the phosphomevalonate kinase ERG8. The diphosphomevalonate decarboxylase MVD then produces isopentenyl diphosphate. The isopentenyl-diphosphate delta-isomerase IDI1 then catalyzes the 1,3-allylic rearrangement of the homoallylic substrate isopentenyl (IPP) to its highly electrophilic allylic isomer, dimethylallyl diphosphate (DMAPP). Finally the farnesyl diphosphate synthase ERG20 catalyzes the sequential condensation of isopentenyl pyrophosphate with dimethylallyl pyrophosphate, and then with the resultant geranylpyrophosphate to the ultimate product farnesyl pyrophosphate. In Candida albicans (strain SC5314 / ATCC MYA-2876) (Yeast), this protein is Diphosphomevalonate decarboxylase.